We begin with the raw amino-acid sequence, 3184 residues long: Cilia and flagella-associated protein 47 (3184 aa).

One can recognise a Calponin-homology (CH) domain in the interval 1729–1851 (SDSERILLSW…LCVYLYERLP (123 aa)). The interval 2491–2514 (RDEEESQEETDTEKDFSSQETPSD) is disordered. The segment covering 2493–2502 (EEESQEETDT) has biased composition (acidic residues).

Interacts with CFAP65. Highly expressed in spermatzoa (at protein level).

It is found in the cytoplasm. It localises to the cytoskeleton. Its subcellular location is the flagellum basal body. Its function is as follows. Plays a role in flagellar formation and sperm motility. This Mus musculus (Mouse) protein is Cilia and flagella-associated protein 47.